A 215-amino-acid polypeptide reads, in one-letter code: Thiamine-phosphate synthase (215 aa).

Residues 37-41 and asparagine 69 contribute to the 4-amino-2-methyl-5-(diphosphooxymethyl)pyrimidine site; that span reads QLRIK. Residues aspartate 70 and aspartate 89 each coordinate Mg(2+). Serine 108 provides a ligand contact to 4-amino-2-methyl-5-(diphosphooxymethyl)pyrimidine. Position 134–136 (134–136) interacts with 2-[(2R,5Z)-2-carboxy-4-methylthiazol-5(2H)-ylidene]ethyl phosphate; that stretch reads TQT. Residue lysine 137 coordinates 4-amino-2-methyl-5-(diphosphooxymethyl)pyrimidine. Residues glycine 166 and 186–187 each bind 2-[(2R,5Z)-2-carboxy-4-methylthiazol-5(2H)-ylidene]ethyl phosphate; that span reads VS.

Belongs to the thiamine-phosphate synthase family. Requires Mg(2+) as cofactor.

The enzyme catalyses 2-[(2R,5Z)-2-carboxy-4-methylthiazol-5(2H)-ylidene]ethyl phosphate + 4-amino-2-methyl-5-(diphosphooxymethyl)pyrimidine + 2 H(+) = thiamine phosphate + CO2 + diphosphate. It catalyses the reaction 2-(2-carboxy-4-methylthiazol-5-yl)ethyl phosphate + 4-amino-2-methyl-5-(diphosphooxymethyl)pyrimidine + 2 H(+) = thiamine phosphate + CO2 + diphosphate. It carries out the reaction 4-methyl-5-(2-phosphooxyethyl)-thiazole + 4-amino-2-methyl-5-(diphosphooxymethyl)pyrimidine + H(+) = thiamine phosphate + diphosphate. It functions in the pathway cofactor biosynthesis; thiamine diphosphate biosynthesis; thiamine phosphate from 4-amino-2-methyl-5-diphosphomethylpyrimidine and 4-methyl-5-(2-phosphoethyl)-thiazole: step 1/1. Condenses 4-methyl-5-(beta-hydroxyethyl)thiazole monophosphate (THZ-P) and 2-methyl-4-amino-5-hydroxymethyl pyrimidine pyrophosphate (HMP-PP) to form thiamine monophosphate (TMP). The polypeptide is Thiamine-phosphate synthase (Yersinia pseudotuberculosis serotype I (strain IP32953)).